Consider the following 70-residue polypeptide: uncharacterized protein (70 aa).

This is an uncharacterized protein from Acidianus convivator (ATV).